The primary structure comprises 273 residues: Undecaprenyl-diphosphatase (273 aa).

A run of 8 helical transmembrane segments spans residues 3-23 (IILWLQAVILGLVQGMTEFLP), 47-67 (ALDAMQFGSVIAVLGYFWQDI), 90-110 (LLLGITVGTIPALAAGLLLKL), 120-140 (IIATMAIAMAILLGLAEQWGS), 148-168 (IGILDGFLVGCGQMIALLPGA), 186-206 (PTAARFSFLLGIPTLTIATLV), 217-237 (LLIPLVIATLSSMVFSYLAIA), and 249-269 (WVFIWYRIGLGSALWGAIALG).

This sequence belongs to the UppP family.

The protein localises to the cell inner membrane. The enzyme catalyses di-trans,octa-cis-undecaprenyl diphosphate + H2O = di-trans,octa-cis-undecaprenyl phosphate + phosphate + H(+). Catalyzes the dephosphorylation of undecaprenyl diphosphate (UPP). Confers resistance to bacitracin. This is Undecaprenyl-diphosphatase from Thermosynechococcus vestitus (strain NIES-2133 / IAM M-273 / BP-1).